Reading from the N-terminus, the 123-residue chain is UPF0102 protein Cbei_1183 (123 aa).

This sequence belongs to the UPF0102 family.

This Clostridium beijerinckii (strain ATCC 51743 / NCIMB 8052) (Clostridium acetobutylicum) protein is UPF0102 protein Cbei_1183.